A 422-amino-acid polypeptide reads, in one-letter code: Elongation factor 1-alpha (422 aa).

The region spanning 5-221 (KPHQNLAVIG…NDLPEPQPPT (217 aa)) is the tr-type G domain. The segment at 14 to 21 (GHVDHGKS) is G1. Residue 14–21 (GHVDHGKS) coordinates GTP. Ser21 is a Mg(2+) binding site. The segment at 70–74 (GVTID) is G2. Positions 91-94 (DCPG) are G3. Residues 91-95 (DCPGH) and 146-149 (NKMD) each bind GTP. The interval 146-149 (NKMD) is G4. Residues 185–187 (SAF) form a G5 region.

This sequence belongs to the TRAFAC class translation factor GTPase superfamily. Classic translation factor GTPase family. EF-Tu/EF-1A subfamily.

It is found in the cytoplasm. It carries out the reaction GTP + H2O = GDP + phosphate + H(+). In terms of biological role, GTP hydrolase that promotes the GTP-dependent binding of aminoacyl-tRNA to the A-site of ribosomes during protein biosynthesis. This chain is Elongation factor 1-alpha, found in Natronomonas pharaonis (strain ATCC 35678 / DSM 2160 / CIP 103997 / JCM 8858 / NBRC 14720 / NCIMB 2260 / Gabara) (Halobacterium pharaonis).